The chain runs to 543 residues: Chaperonin GroEL (543 aa).

ATP-binding positions include 29–32 (TLGP), Lys50, 86–90 (DGTTT), Gly415, and Asp495.

It belongs to the chaperonin (HSP60) family. As to quaternary structure, forms a cylinder of 14 subunits composed of two heptameric rings stacked back-to-back. Interacts with the co-chaperonin GroES.

The protein localises to the cytoplasm. It catalyses the reaction ATP + H2O + a folded polypeptide = ADP + phosphate + an unfolded polypeptide.. In terms of biological role, together with its co-chaperonin GroES, plays an essential role in assisting protein folding. The GroEL-GroES system forms a nano-cage that allows encapsulation of the non-native substrate proteins and provides a physical environment optimized to promote and accelerate protein folding. This is Chaperonin GroEL from Flavobacterium johnsoniae (strain ATCC 17061 / DSM 2064 / JCM 8514 / BCRC 14874 / CCUG 350202 / NBRC 14942 / NCIMB 11054 / UW101) (Cytophaga johnsonae).